A 456-amino-acid polypeptide reads, in one-letter code: MKKHTGTIISISGFVLRIEFNESELPEIGFALEYHTHQGTYLAEVVQHTGINTVSAIAIGEVSGLARGTEVVNLGHPIEVPVGETVQGRMLNVYGKAIDGKPEPAAEVKWPIFRAQPLLRELDTNKEILYTGIKVIDLICPILKGGKTGLFGGAGVGKSVLMQELINNISMLGGNSVFTGVGERVREGIGLYKELEASGVLPQTTVVLGQMNESPGVRMRVALTGLTIAEYLRDEEKKDVLLFIDNVFRFIQAGSEVSSLQGKIPITGGYQSTLSKEVGDFQDRIASTKNGSITSIQCVFLPADDIDDPSAVATFSHLDSTIVLERSIAALGIFPAVNPLQSFSRALNPTFVGERHYQLAVQVKFILQRYMELQEIINVLGMAELSDEDRKLVHRARKIRNFLSQPFYVSEKFTGTEGTFVEIEDLLGSIERILNGDYDERSERDFLFIGSYKDLK.

Residue 152-159 (GGAGVGKS) coordinates ATP.

It belongs to the ATPase alpha/beta chains family. In terms of assembly, F-type ATPases have 2 components, CF(1) - the catalytic core - and CF(0) - the membrane proton channel. CF(1) has five subunits: alpha(3), beta(3), gamma(1), delta(1), epsilon(1). CF(0) has three main subunits: a(1), b(2) and c(9-12). The alpha and beta chains form an alternating ring which encloses part of the gamma chain. CF(1) is attached to CF(0) by a central stalk formed by the gamma and epsilon chains, while a peripheral stalk is formed by the delta and b chains.

The protein localises to the cell membrane. The enzyme catalyses ATP + H2O + 4 H(+)(in) = ADP + phosphate + 5 H(+)(out). Produces ATP from ADP in the presence of a proton gradient across the membrane. The catalytic sites are hosted primarily by the beta subunits. The polypeptide is ATP synthase subunit beta 1 (Listeria monocytogenes serovar 1/2a (strain ATCC BAA-679 / EGD-e)).